Consider the following 132-residue polypeptide: MSMTDPIADMLTRIRNANMARLQKVDIPSSNLKVNLANVLKAEGFIKNYKVIADSRQGVLRVYLKYIDEKDPVINEIKRVSKPGSRVYVGSDKIPSVKNGMGVAILSTSKGLITDKSAREAGVGGEVLCTVW.

This sequence belongs to the universal ribosomal protein uS8 family. In terms of assembly, part of the 30S ribosomal subunit. Contacts proteins S5 and S12.

One of the primary rRNA binding proteins, it binds directly to 16S rRNA central domain where it helps coordinate assembly of the platform of the 30S subunit. In Geobacter sulfurreducens (strain ATCC 51573 / DSM 12127 / PCA), this protein is Small ribosomal subunit protein uS8.